The sequence spans 169 residues: E1B protein, small T-antigen (169 aa).

The disordered stretch occupies residues 147–169 (GSVVEEEQGEEHLARDSDDPFFD). A compositionally biased stretch (basic and acidic residues) spans 156–169 (EEHLARDSDDPFFD).

Belongs to the adenoviridae E1B 19 kDa protein family.

The chain is E1B protein, small T-antigen from Canine adenovirus serotype 1 (strain Glaxo) (CAdV-1).